A 213-amino-acid polypeptide reads, in one-letter code: Probable nicotinate-nucleotide adenylyltransferase (213 aa).

The protein belongs to the NadD family.

It catalyses the reaction nicotinate beta-D-ribonucleotide + ATP + H(+) = deamido-NAD(+) + diphosphate. It participates in cofactor biosynthesis; NAD(+) biosynthesis; deamido-NAD(+) from nicotinate D-ribonucleotide: step 1/1. In terms of biological role, catalyzes the reversible adenylation of nicotinate mononucleotide (NaMN) to nicotinic acid adenine dinucleotide (NaAD). This is Probable nicotinate-nucleotide adenylyltransferase from Shigella boydii serotype 18 (strain CDC 3083-94 / BS512).